A 359-amino-acid chain; its full sequence is Histidinol-phosphate aminotransferase (359 aa).

K217 bears the N6-(pyridoxal phosphate)lysine mark.

The protein belongs to the class-II pyridoxal-phosphate-dependent aminotransferase family. Histidinol-phosphate aminotransferase subfamily. Homodimer. The cofactor is pyridoxal 5'-phosphate.

It catalyses the reaction L-histidinol phosphate + 2-oxoglutarate = 3-(imidazol-4-yl)-2-oxopropyl phosphate + L-glutamate. It functions in the pathway amino-acid biosynthesis; L-histidine biosynthesis; L-histidine from 5-phospho-alpha-D-ribose 1-diphosphate: step 7/9. The protein is Histidinol-phosphate aminotransferase of Salmonella paratyphi A (strain ATCC 9150 / SARB42).